The sequence spans 273 residues: 5-deoxy-glucuronate isomerase (273 aa).

Belongs to the isomerase IolB family.

The enzyme catalyses 5-deoxy-D-glucuronate = 5-dehydro-2-deoxy-D-gluconate. Its pathway is polyol metabolism; myo-inositol degradation into acetyl-CoA; acetyl-CoA from myo-inositol: step 4/7. Functionally, involved in the isomerization of 5-deoxy-glucuronate (5DG) to 5-dehydro-2-deoxy-D-gluconate (DKG or 2-deoxy-5-keto-D-gluconate). The polypeptide is 5-deoxy-glucuronate isomerase (Listeria monocytogenes serotype 4b (strain CLIP80459)).